The primary structure comprises 127 residues: Large ribosomal subunit protein bL12 (127 aa).

It belongs to the bacterial ribosomal protein bL12 family. As to quaternary structure, homodimer. Part of the ribosomal stalk of the 50S ribosomal subunit. Forms a multimeric L10(L12)X complex, where L10 forms an elongated spine to which 2 to 4 L12 dimers bind in a sequential fashion. Binds GTP-bound translation factors.

In terms of biological role, forms part of the ribosomal stalk which helps the ribosome interact with GTP-bound translation factors. Is thus essential for accurate translation. This is Large ribosomal subunit protein bL12 from Caulobacter vibrioides (strain ATCC 19089 / CIP 103742 / CB 15) (Caulobacter crescentus).